Reading from the N-terminus, the 486-residue chain is Patatin-like phospholipase domain-containing protein 2 (486 aa).

Residues 1–8 (MFPRETKW) are Cytoplasmic-facing. The helical transmembrane segment at 9-29 (NISFAGCGFLGVYHIGVASCL) threads the bilayer. The region spanning 10-179 (ISFAGCGFLG…SDNLPLYELK (170 aa)) is the PNPLA domain. Positions 14–19 (GCGFLG) match the GXGXXG motif. Residues 30–42 (REHAPFLVANATH) are Extracellular-facing. N-linked (GlcNAc...) asparagine glycosylation occurs at asparagine 39. Residues 43-63 (IYGASAGALTATALVTGACLG) form a helical membrane-spanning segment. The GXSXG motif lies at 45 to 49 (GASAG). Serine 47 functions as the Nucleophile in the catalytic mechanism. Over 64–137 (EAGANIIEVS…IISHFSSKDE (74 aa)) the chain is Cytoplasmic. Lysine 92 participates in a covalent cross-link: Glycyl lysine isopeptide (Lys-Gly) (interchain with G-Cter in ubiquitin). The helical transmembrane segment at 138-158 (LIQANVCSTFIPVYCGLIPPT) threads the bilayer. Residues 159–331 (LQGVRYVDGG…TTLSNMLPVR (173 aa)) are Extracellular-facing. The active-site Proton acceptor is the aspartate 166. Residues 166–168 (DGG) carry the DGA/G motif. A helical transmembrane segment spans residues 332–352 (LATAMMVPYTLPLESAVSFTI). Over 353-486 (RLLEWLPDVP…PQDPPGLPPC (134 aa)) the chain is Cytoplasmic. Serine 374 is modified (phosphoserine; in vitro). Residues serine 396 and serine 406 each carry the phosphoserine; by PKA modification. Serine 430 and serine 468 each carry phosphoserine; in vitro. Over residues 465–476 (APASPTAADPAT) the composition is skewed to low complexity. A disordered region spans residues 465-486 (APASPTAADPATPQDPPGLPPC). Residues 477–486 (PQDPPGLPPC) are compositionally biased toward pro residues.

As to quaternary structure, interacts with ABHD5; this association stimulates PNPLA2 triglyceride hydrolase activity. Interacts with SERPINF1; this interaction stimulates the phospholipase A2 activity of PNPLA2. Despite a colocalization in lipid droplets, it probably does not interact with PLIN. Interacts with PLIN5; prevents interaction with ABHD5. Interacts with FAF2. Phosphorylation at Ser-406 by PKA is increased during fasting and moderate intensity exercise, and moderately increases lipolytic activity. Post-translationally, ubiquitinated by PEX2 in response to reactive oxygen species (ROS), leading to its degradation. Ubiquitination is stimulated by LDAH. Expressed at high levels in white and brown adipose tissue, and to a lesser degree in testis and cardiac muscle. Barely detected in liver, spleen, thymus, kidney, skeletal muscle, and brain. Among the white adipose depots, gonadal fat showed the highest level of expression compared with inguinal and renal white adipose tissues.

Its subcellular location is the lipid droplet. The protein resides in the cell membrane. It localises to the cytoplasm. It carries out the reaction a triacylglycerol + H2O = a diacylglycerol + a fatty acid + H(+). The enzyme catalyses a triacylglycerol + H2O = a 1,2-diacylglycerol + a fatty acid + H(+). The catalysed reaction is a triacylglycerol + H2O = a 1,3-diacylglycerol + a fatty acid + H(+). It catalyses the reaction a triacyl-sn-glycerol + H2O = a 2,3-diacyl-sn-glycerol + a fatty acid + H(+). It carries out the reaction a triacyl-sn-glycerol + H2O = a 1,3-diacyl-sn-glycerol + a fatty acid + H(+). The enzyme catalyses 1,2,3-tri-(9Z-octadecenoyl)-glycerol + H2O = 1,3-di-(9Z-octadecenoyl)-glycerol + (9Z)-octadecenoate + H(+). The catalysed reaction is 1,2,3-tri-(9Z)-hexadecenoylglycerol + H2O = 1,3-di-(9Z)-hexadecenoylglycerol + (9Z)-hexadecenoate + H(+). It catalyses the reaction 1,2,3-tri-(9Z,12Z)-octadecadienoylglycerol + H2O = 1,3-di-(9Z,12Z)-octadecadienoylglycerol + (9Z,12Z)-octadecadienoate + H(+). It carries out the reaction 1,2,3-tri-(9Z,12Z,15Z)-octadecatrienoylglycerol + H2O = 1,3-di-(9Z,12Z,15Z)-octadecatrienoylglycerol + (9Z,12Z,15Z)-octadecatrienoate + H(+). The enzyme catalyses 1,3-di-(9Z)-octadecenoyl-2-hexadecanoylglycerol + H2O = 1,3-di-(9Z-octadecenoyl)-glycerol + hexadecanoate + H(+). The catalysed reaction is 1,2-di-(9Z)-octadecenoyl-3-hexadecanoyl-sn-glycerol + H2O = 1-(9Z)-octadecenoyl-3-hexadecanoyl-sn-glycerol + (9Z)-octadecenoate + H(+). It catalyses the reaction 1-hexadecanoyl-2,3-di-(9Z)-octadecenoyl-sn-glycerol + H2O = 1-hexadecanoyl-3-(9Z)-octadecenoyl-sn-glycerol + (9Z)-octadecenoate + H(+). It carries out the reaction 1,2,3-tri-(9Z-octadecenoyl)-glycerol + H2O = 2,3-di-(9Z)-octadecenoyl-sn-glycerol + (9Z)-octadecenoate + H(+). The enzyme catalyses 1,2,3-tri-(9Z)-hexadecenoylglycerol + H2O = 2,3-di-(9Z)-hexadecenoyl-sn-glycerol + (9Z)-hexadecenoate + H(+). The catalysed reaction is 1,2,3-tri-(9Z,12Z)-octadecadienoylglycerol + H2O = 2,3-di-(9Z,12Z)-octadecadienoyl-sn-glycerol + (9Z,12Z)-octadecadienoate + H(+). It catalyses the reaction 1,2,3-tri-(9Z,12Z,15Z)-octadecatrienoylglycerol + H2O = 2,3-di-(9Z,12Z,15Z)-octadecatrienoyl-sn-glycerol + (9Z,12Z,15Z)-octadecatrienoate + H(+). It carries out the reaction 1,3-di-(9Z)-octadecenoyl-2-hexadecanoylglycerol + H2O = 2-hexadecanoyl-3-(9Z)-octadecenoyl-sn-glycerol + (9Z)-octadecenoate + H(+). The enzyme catalyses 1-hexadecanoyl-2,3-di-(9Z)-octadecenoyl-sn-glycerol + H2O = 2,3-di-(9Z)-octadecenoyl-sn-glycerol + hexadecanoate + H(+). The catalysed reaction is 1,2-di-(9Z)-octadecenoyl-3-hexadecanoyl-sn-glycerol + H2O = 2-(9Z-octadecenoyl)-3-hexadecanoyl-sn-glycerol + (9Z)-octadecenoate + H(+). It catalyses the reaction 1,2-di-(9Z-octadecenoyl)-glycerol + (9Z)-octadecenoate + H(+) = 1,2,3-tri-(9Z-octadecenoyl)-glycerol + H2O. It carries out the reaction a 1-acylglycerol + a 1,3-diacylglycerol = a triacylglycerol + glycerol. The enzyme catalyses a 1-acylglycerol + a 1,2-diacylglycerol = a triacylglycerol + glycerol. The catalysed reaction is 2 a 1-acylglycerol = a 1,2-diacylglycerol + glycerol. It catalyses the reaction a triacylglycerol + all-trans-retinol = an all-trans-retinyl ester + a diacylglycerol. It carries out the reaction 1-(9Z-octadecenoyl)-glycerol + 1,3-di-(9Z-octadecenoyl)-glycerol = 1,2,3-tri-(9Z-octadecenoyl)-glycerol + glycerol. The enzyme catalyses 1-(9Z-octadecenoyl)-glycerol + 1,2-di-(9Z-octadecenoyl)-glycerol = 1,2,3-tri-(9Z-octadecenoyl)-glycerol + glycerol. The catalysed reaction is 2 1-(9Z-octadecenoyl)-glycerol = 1,2-di-(9Z-octadecenoyl)-glycerol + glycerol. It catalyses the reaction 1,2,3-tri-(9Z-octadecenoyl)-glycerol + all-trans-retinol = all-trans-retinyl 9Z-octadecenoate + di-(9Z)-octadecenoylglycerol. It carries out the reaction a 1,2-diacyl-sn-glycero-3-phosphocholine + H2O = a 1-acyl-sn-glycero-3-phosphocholine + a fatty acid + H(+). The enzyme catalyses 1,2,3-tri-(9Z-octadecenoyl)-glycerol + 9-hydroxy-octadecanoate = 9-(9Z-octadecenoyloxy)-octadecanoate + 2,3-di-(9Z)-octadecenoyl-sn-glycerol. The catalysed reaction is 1-hexadecanoyl-2,3-di-(9Z)-octadecenoyl-sn-glycerol + 9-hydroxy-octadecanoate = 9-hexadecanoyloxy-octadecanoate + 2,3-di-(9Z)-octadecenoyl-sn-glycerol. It catalyses the reaction 1,2,3-tri-(10Z)-heptadecenoylglycerol + 9-hydroxy-octadecanoate = 2,3-di-(10Z-heptadecenoyl)-sn-glycerol + 9-(10Z-heptadecenoyloxy)-octadecanoate. It carries out the reaction 1,2,3-tri-(9Z,12Z)-octadecadienoylglycerol + 9-hydroxy-octadecanoate = 2,3-di-(9Z,12Z)-octadecadienoyl-sn-glycerol + 9-(9Z,12Z-octadecadienoyloxy)-octadecanoate. The enzyme catalyses 1,2,3-tri-(9Z)-hexadecenoylglycerol + 9-hydroxy-octadecanoate = 2,3-di-(9Z)-hexadecenoyl-sn-glycerol + 9-(9Z-hexadecenoyloxy)-octadecanoate. The catalysed reaction is 9-hydroxy-octadecanoate + 1,2-di-(9Z-octadecenoyl)-sn-glycerol = 9-(9Z-octadecenoyloxy)-octadecanoate + 2-(9Z-octadecenoyl)-glycerol. It catalyses the reaction 1-hexadecanoyl-2,3-di-(9Z)-octadecenoyl-sn-glycerol + 9-hydroxy-octadecanoate = 1-hexadecanoyl-3-(9Z)-octadecenoyl-sn-glycerol + 9-(9Z-octadecenoyloxy)-octadecanoate. Its pathway is glycerolipid metabolism; triacylglycerol degradation. With respect to regulation, stimulated by PKA-dependent PLIN phosphorylation. Its function is as follows. Catalyzes the initial step in triglyceride hydrolysis in adipocyte and non-adipocyte lipid droplets. Exhibits a strong preference for the hydrolysis of long-chain fatty acid esters at the sn-2 position of the glycerol backbone and acts coordinately with LIPE/HLS and DGAT2 within the lipolytic cascade. Also possesses acylglycerol transacylase and phospholipase A2 activities. Transfers fatty acid from triglyceride to retinol, hydrolyzes retinylesters, and generates 1,3-diacylglycerol from triglycerides. Regulates adiposome size and may be involved in the degradation of adiposomes. Catalyzes the formation of an ester bond between hydroxy fatty acids and fatty acids derived from triglycerides or diglycerides to generate fatty acid esters of hydroxy fatty acids (FAHFAs) in adipocytes. Acts antagonistically with LDAH in regulation of cellular lipid stores. Inhibits LDAH-stimulated lipid droplet fusion. May play an important role in energy homeostasis. May play a role in the response of the organism to starvation, enhancing hydrolysis of triglycerides and providing free fatty acids to other tissues to be oxidized in situations of energy depletion. The chain is Patatin-like phospholipase domain-containing protein 2 from Mus musculus (Mouse).